A 133-amino-acid chain; its full sequence is Small ribosomal subunit protein uS11 (133 aa).

This sequence belongs to the universal ribosomal protein uS11 family. As to quaternary structure, part of the 30S ribosomal subunit. Interacts with proteins S7 and S18. Binds to IF-3.

Functionally, located on the platform of the 30S subunit, it bridges several disparate RNA helices of the 16S rRNA. Forms part of the Shine-Dalgarno cleft in the 70S ribosome. The sequence is that of Small ribosomal subunit protein uS11 from Chlamydia pneumoniae (Chlamydophila pneumoniae).